A 464-amino-acid polypeptide reads, in one-letter code: Argininosuccinate lyase (464 aa).

It belongs to the lyase 1 family. Argininosuccinate lyase subfamily.

The protein localises to the cytoplasm. The enzyme catalyses 2-(N(omega)-L-arginino)succinate = fumarate + L-arginine. The protein operates within amino-acid biosynthesis; L-arginine biosynthesis; L-arginine from L-ornithine and carbamoyl phosphate: step 3/3. The protein is Argininosuccinate lyase of Desulfotalea psychrophila (strain LSv54 / DSM 12343).